The sequence spans 296 residues: Ribosomal protein L11 methyltransferase (296 aa).

Residues Thr-145, Gly-166, Asp-188, and Asn-230 each contribute to the S-adenosyl-L-methionine site.

This sequence belongs to the methyltransferase superfamily. PrmA family.

The protein localises to the cytoplasm. It catalyses the reaction L-lysyl-[protein] + 3 S-adenosyl-L-methionine = N(6),N(6),N(6)-trimethyl-L-lysyl-[protein] + 3 S-adenosyl-L-homocysteine + 3 H(+). Methylates ribosomal protein L11. This Histophilus somni (strain 129Pt) (Haemophilus somnus) protein is Ribosomal protein L11 methyltransferase.